A 324-amino-acid polypeptide reads, in one-letter code: tRNA N6-adenosine threonylcarbamoyltransferase (324 aa).

Residues His107, His111, and Tyr127 each contribute to the Fe cation site. Substrate-binding positions include 127 to 131 (YVSGG), Asp159, Gly172, Glu176, and Asn257. Position 285 (Asp285) interacts with Fe cation.

This sequence belongs to the KAE1 / TsaD family. Monomer. Component of the KEOPS complex that consists of Kae1, Bud32, Cgi121 and Pcc1; the whole complex dimerizes. It depends on Fe(2+) as a cofactor.

The protein resides in the cytoplasm. It catalyses the reaction L-threonylcarbamoyladenylate + adenosine(37) in tRNA = N(6)-L-threonylcarbamoyladenosine(37) in tRNA + AMP + H(+). Its function is as follows. Required for the formation of a threonylcarbamoyl group on adenosine at position 37 (t(6)A37) in tRNAs that read codons beginning with adenine. Is a component of the KEOPS complex that is probably involved in the transfer of the threonylcarbamoyl moiety of threonylcarbamoyl-AMP (TC-AMP) to the N6 group of A37. Kae1 likely plays a direct catalytic role in this reaction, but requires other protein(s) of the complex to fulfill this activity. In Thermococcus sibiricus (strain DSM 12597 / MM 739), this protein is tRNA N6-adenosine threonylcarbamoyltransferase.